The sequence spans 358 residues: Alanine racemase (358 aa).

The active-site Proton acceptor; specific for D-alanine is lysine 35. The residue at position 35 (lysine 35) is an N6-(pyridoxal phosphate)lysine. Arginine 130 contacts substrate. Tyrosine 255 (proton acceptor; specific for L-alanine) is an active-site residue. Substrate is bound at residue methionine 303.

It belongs to the alanine racemase family. Pyridoxal 5'-phosphate serves as cofactor.

The enzyme catalyses L-alanine = D-alanine. Its pathway is amino-acid biosynthesis; D-alanine biosynthesis; D-alanine from L-alanine: step 1/1. Functionally, catalyzes the interconversion of L-alanine and D-alanine. May also act on other amino acids. The protein is Alanine racemase (alr) of Shewanella sp. (strain W3-18-1).